A 428-amino-acid chain; its full sequence is 3-phosphoshikimate 1-carboxyvinyltransferase (428 aa).

3-phosphoshikimate-binding residues include Lys23, Ser24, and Arg28. Lys23 is a binding site for phosphoenolpyruvate. Residues Gly97 and Arg125 each contribute to the phosphoenolpyruvate site. 3-phosphoshikimate contacts are provided by Ser170, Ser171, Gln172, Ser198, Asp314, Asn337, and Lys341. Phosphoenolpyruvate is bound at residue Gln172. The active-site Proton acceptor is the Asp314. Arg345, Arg387, and Lys412 together coordinate phosphoenolpyruvate.

It belongs to the EPSP synthase family. Monomer.

It localises to the cytoplasm. The enzyme catalyses 3-phosphoshikimate + phosphoenolpyruvate = 5-O-(1-carboxyvinyl)-3-phosphoshikimate + phosphate. Its pathway is metabolic intermediate biosynthesis; chorismate biosynthesis; chorismate from D-erythrose 4-phosphate and phosphoenolpyruvate: step 6/7. Catalyzes the transfer of the enolpyruvyl moiety of phosphoenolpyruvate (PEP) to the 5-hydroxyl of shikimate-3-phosphate (S3P) to produce enolpyruvyl shikimate-3-phosphate and inorganic phosphate. The chain is 3-phosphoshikimate 1-carboxyvinyltransferase from Cronobacter sakazakii (strain ATCC BAA-894) (Enterobacter sakazakii).